We begin with the raw amino-acid sequence, 264 residues long: 3-methyl-2-oxobutanoate hydroxymethyltransferase (264 aa).

Mg(2+) contacts are provided by aspartate 44 and aspartate 83. 3-methyl-2-oxobutanoate is bound by residues 44–45 (DS), aspartate 83, and lysine 112. Glutamate 114 lines the Mg(2+) pocket. Glutamate 181 functions as the Proton acceptor in the catalytic mechanism.

This sequence belongs to the PanB family. Homodecamer; pentamer of dimers. It depends on Mg(2+) as a cofactor.

It is found in the cytoplasm. It catalyses the reaction 3-methyl-2-oxobutanoate + (6R)-5,10-methylene-5,6,7,8-tetrahydrofolate + H2O = 2-dehydropantoate + (6S)-5,6,7,8-tetrahydrofolate. The protein operates within cofactor biosynthesis; coenzyme A biosynthesis. Its function is as follows. Catalyzes the reversible reaction in which hydroxymethyl group from 5,10-methylenetetrahydrofolate is transferred onto alpha-ketoisovalerate to form ketopantoate. The protein is 3-methyl-2-oxobutanoate hydroxymethyltransferase of Pyrobaculum arsenaticum (strain DSM 13514 / JCM 11321 / PZ6).